We begin with the raw amino-acid sequence, 434 residues long: Transcription elongation factor B polypeptide 3 (434 aa).

The tract at residues 142–161 (KPEPVDVHEQQASSSSMSYQ) is disordered. Positions 151-160 (QQASSSSMSY) are enriched in polar residues. A BC box region spans residues 221 to 230 (TLVSLCQTVL). The F-box domain maps to 237–281 (IDHVGIVPFDLLKPVLDHASTDQLRHILDVNPMLVEDADEMFHEM). Positions 391–415 (ITPRGGGVPSTSRSRSNNNNNMNNG) are disordered.

As to quaternary structure, heterotrimer of an A, B and C subunit.

The protein resides in the nucleus. Its function is as follows. SIII, also known as elongin, is a general transcription elongation factor that increases the RNA polymerase II transcription elongation past template-encoded arresting sites. Subunit A is transcriptionally active and its transcription activity is strongly enhanced by binding to the dimeric complex of the SIII regulatory subunits B and C (elongin BC complex). This chain is Transcription elongation factor B polypeptide 3, found in Caenorhabditis elegans.